The chain runs to 488 residues: Protein nucleotidyltransferase YdiU (488 aa).

G90, G92, R93, K113, D125, G126, R176, and R183 together coordinate ATP. The active-site Proton acceptor is the D252. Mg(2+) is bound by residues N253 and D262. ATP is bound at residue D262.

The protein belongs to the SELO family. Mg(2+) serves as cofactor. Mn(2+) is required as a cofactor.

It carries out the reaction L-seryl-[protein] + ATP = 3-O-(5'-adenylyl)-L-seryl-[protein] + diphosphate. The enzyme catalyses L-threonyl-[protein] + ATP = 3-O-(5'-adenylyl)-L-threonyl-[protein] + diphosphate. It catalyses the reaction L-tyrosyl-[protein] + ATP = O-(5'-adenylyl)-L-tyrosyl-[protein] + diphosphate. The catalysed reaction is L-histidyl-[protein] + UTP = N(tele)-(5'-uridylyl)-L-histidyl-[protein] + diphosphate. It carries out the reaction L-seryl-[protein] + UTP = O-(5'-uridylyl)-L-seryl-[protein] + diphosphate. The enzyme catalyses L-tyrosyl-[protein] + UTP = O-(5'-uridylyl)-L-tyrosyl-[protein] + diphosphate. In terms of biological role, nucleotidyltransferase involved in the post-translational modification of proteins. It can catalyze the addition of adenosine monophosphate (AMP) or uridine monophosphate (UMP) to a protein, resulting in modifications known as AMPylation and UMPylation. This chain is Protein nucleotidyltransferase YdiU, found in Thiobacillus denitrificans (strain ATCC 25259 / T1).